Reading from the N-terminus, the 350-residue chain is Quinone oxidoreductase-like protein 2 (350 aa).

Lys-36 bears the N6-acetyllysine mark. Lys-201 is modified (N6-succinyllysine). Lys-302 and Lys-328 each carry N6-acetyllysine.

This sequence belongs to the zinc-containing alcohol dehydrogenase family. Quinone oxidoreductase subfamily.

This Mus musculus (Mouse) protein is Quinone oxidoreductase-like protein 2.